Consider the following 356-residue polypeptide: CMP-sialic acid transporter 2 (356 aa).

Basic and acidic residues predominate over residues 1-24; it reads MEYRRVKDQESYDVVSQKDIESPG. The tract at residues 1 to 44 is disordered; sequence MEYRRVKDQESYDVVSQKDIESPGERSLSSTSATSSLSTAGASK. Residues 1–52 are Cytoplasmic-facing; the sequence is MEYRRVKDQESYDVVSQKDIESPGERSLSSTSATSSLSTAGASKGKNSWKLK. The span at 27 to 44 shows a compositional bias: low complexity; it reads SLSSTSATSSLSTAGASK. A helical membrane pass occupies residues 53-73; it reads SIVTLALTLLTSSQAILIVWS. Residues 74 to 82 are Lumenal-facing; the sequence is KRAGKYEYS. Residues 83–103 traverse the membrane as a helical segment; the sequence is VTTANFSVEALKCLLSLIALY. Residues 104 to 125 lie on the Cytoplasmic side of the membrane; the sequence is RTWNSQGVTEDNRLSTSFDEVS. The chain crosses the membrane as a helical span at residues 126–146; it reads VYPIPAILYMVKNLLQYYIFA. Topologically, residues 147–149 are lumenal; that stretch reads YVD. The helical transmembrane segment at 150 to 172 threads the bilayer; the sequence is APAYQILKNLNIISTGVLYRIIL. At 173–175 the chain is on the cytoplasmic side; the sequence is KKK. Residues 176–196 traverse the membrane as a helical segment; sequence LSEIQWAAFILLCAGCTTAQL. Topologically, residues 197-211 are lumenal; sequence NPSSDHVLQTPIQGW. Residues 212 to 232 traverse the membrane as a helical segment; sequence VMAIVMALLSGFAGVYTEAII. Residues 233-239 are Cytoplasmic-facing; that stretch reads KKRPSRN. A helical transmembrane segment spans residues 240 to 260; that stretch reads INVQNFWLYIFGMLFNLVAIC. Over 261–277 the chain is Lumenal; the sequence is VQDFDAVMNKGFFHGYS. The helical transmembrane segment at 278–298 threads the bilayer; the sequence is FITVLMILNHALSGIAVSMVM. Over 299–314 the chain is Cytoplasmic; that stretch reads KYADNIVKVYSTSVAM. Residues 315-335 traverse the membrane as a helical segment; it reads LLTAVVSVFLFGFHLSLAFFL. The Lumenal segment spans residues 336–356; it reads GSTVVSVSVYLHSVGKPQPQK.

Belongs to the nucleotide-sugar transporter family. CMP-Sialate:CMP antiporter (TC 2.A.7.12) subfamily. Expressed in roots, leaves and stalks.

Its subcellular location is the golgi apparatus membrane. Sugar transporter involved in the transport of CMP-sialic acid from the cytoplasm into the Golgi. May transport important nucleotide sugars such as CMP-Kdo (2-keto-3-deoxy-D-manno-octulosonic acid) in physiological conditions. The chain is CMP-sialic acid transporter 2 from Oryza sativa subsp. japonica (Rice).